The chain runs to 341 residues: tRNA N6-adenosine threonylcarbamoyltransferase (341 aa).

Residues H111 and H115 each contribute to the Fe cation site. Residues 134-138 (LVSGG), D167, G180, and N276 each bind substrate. D304 serves as a coordination point for Fe cation.

This sequence belongs to the KAE1 / TsaD family. Fe(2+) is required as a cofactor.

It is found in the cytoplasm. The enzyme catalyses L-threonylcarbamoyladenylate + adenosine(37) in tRNA = N(6)-L-threonylcarbamoyladenosine(37) in tRNA + AMP + H(+). Required for the formation of a threonylcarbamoyl group on adenosine at position 37 (t(6)A37) in tRNAs that read codons beginning with adenine. Is involved in the transfer of the threonylcarbamoyl moiety of threonylcarbamoyl-AMP (TC-AMP) to the N6 group of A37, together with TsaE and TsaB. TsaD likely plays a direct catalytic role in this reaction. This is tRNA N6-adenosine threonylcarbamoyltransferase from Azotobacter vinelandii (strain DJ / ATCC BAA-1303).